Reading from the N-terminus, the 330-residue chain is Phosphate acyltransferase (330 aa).

The protein belongs to the PlsX family. In terms of assembly, homodimer. Probably interacts with PlsY.

The protein localises to the cytoplasm. The enzyme catalyses a fatty acyl-[ACP] + phosphate = an acyl phosphate + holo-[ACP]. It participates in lipid metabolism; phospholipid metabolism. Catalyzes the reversible formation of acyl-phosphate (acyl-PO(4)) from acyl-[acyl-carrier-protein] (acyl-ACP). This enzyme utilizes acyl-ACP as fatty acyl donor, but not acyl-CoA. This Teredinibacter turnerae (strain ATCC 39867 / T7901) protein is Phosphate acyltransferase.